We begin with the raw amino-acid sequence, 286 residues long: Bifunctional protein FolD (286 aa).

NADP(+) is bound by residues 166–168 (GAS) and Ile-232.

Belongs to the tetrahydrofolate dehydrogenase/cyclohydrolase family. As to quaternary structure, homodimer.

It carries out the reaction (6R)-5,10-methylene-5,6,7,8-tetrahydrofolate + NADP(+) = (6R)-5,10-methenyltetrahydrofolate + NADPH. The enzyme catalyses (6R)-5,10-methenyltetrahydrofolate + H2O = (6R)-10-formyltetrahydrofolate + H(+). It participates in one-carbon metabolism; tetrahydrofolate interconversion. Its function is as follows. Catalyzes the oxidation of 5,10-methylenetetrahydrofolate to 5,10-methenyltetrahydrofolate and then the hydrolysis of 5,10-methenyltetrahydrofolate to 10-formyltetrahydrofolate. The protein is Bifunctional protein FolD of Vibrio parahaemolyticus serotype O3:K6 (strain RIMD 2210633).